The primary structure comprises 485 residues: Bifunctional protein GlmU (485 aa).

Positions 1–241 are pyrophosphorylase; it reads MSASDFSSAV…ARELAGVNDR (241 aa). Residues 13–16, Lys-27, Gln-84, and 89–90 contribute to the UDP-N-acetyl-alpha-D-glucosamine site; these read LAAG and GT. Residue Asp-114 coordinates Mg(2+). UDP-N-acetyl-alpha-D-glucosamine-binding residues include Gly-151, Glu-166, Asn-181, and Asn-239. Residue Asn-239 participates in Mg(2+) binding. A linker region spans residues 242 to 262; sequence VQLAEAGAELNRRTVIAAMRG. Residues 263 to 485 form an N-acetyltransferase region; it reads GATIVDPATT…AAQNVHNQEG (223 aa). Positions 344 and 362 each coordinate UDP-N-acetyl-alpha-D-glucosamine. Residue His-374 is the Proton acceptor of the active site. Positions 377 and 388 each coordinate UDP-N-acetyl-alpha-D-glucosamine. Acetyl-CoA is bound by residues Ala-391, 397–398, Ser-416, and Ala-434; that span reads NY. A disordered region spans residues 465–485; sequence RPGTAAAQAAEAAQNVHNQEG. The span at 469-478 shows a compositional bias: low complexity; the sequence is AAAQAAEAAQ.

It in the N-terminal section; belongs to the N-acetylglucosamine-1-phosphate uridyltransferase family. This sequence in the C-terminal section; belongs to the transferase hexapeptide repeat family. Homotrimer. It depends on Mg(2+) as a cofactor.

It localises to the cytoplasm. It catalyses the reaction alpha-D-glucosamine 1-phosphate + acetyl-CoA = N-acetyl-alpha-D-glucosamine 1-phosphate + CoA + H(+). It carries out the reaction N-acetyl-alpha-D-glucosamine 1-phosphate + UTP + H(+) = UDP-N-acetyl-alpha-D-glucosamine + diphosphate. The protein operates within nucleotide-sugar biosynthesis; UDP-N-acetyl-alpha-D-glucosamine biosynthesis; N-acetyl-alpha-D-glucosamine 1-phosphate from alpha-D-glucosamine 6-phosphate (route II): step 2/2. It functions in the pathway nucleotide-sugar biosynthesis; UDP-N-acetyl-alpha-D-glucosamine biosynthesis; UDP-N-acetyl-alpha-D-glucosamine from N-acetyl-alpha-D-glucosamine 1-phosphate: step 1/1. Its pathway is bacterial outer membrane biogenesis; LPS lipid A biosynthesis. Catalyzes the last two sequential reactions in the de novo biosynthetic pathway for UDP-N-acetylglucosamine (UDP-GlcNAc). The C-terminal domain catalyzes the transfer of acetyl group from acetyl coenzyme A to glucosamine-1-phosphate (GlcN-1-P) to produce N-acetylglucosamine-1-phosphate (GlcNAc-1-P), which is converted into UDP-GlcNAc by the transfer of uridine 5-monophosphate (from uridine 5-triphosphate), a reaction catalyzed by the N-terminal domain. The sequence is that of Bifunctional protein GlmU from Corynebacterium glutamicum (strain R).